Reading from the N-terminus, the 504-residue chain is Cystathionine beta-synthase (504 aa).

The heme site is built by cysteine 12 and histidine 23. Position 78 is an N6-(pyridoxal phosphate)lysine (lysine 78). Pyridoxal 5'-phosphate contacts are provided by residues asparagine 108, 215–219 (GTGGT), and serine 307. CBS domains lie at 375–434 (LSFD…IVKC) and 442–498 (MVKQ…NGTS).

It belongs to the cysteine synthase/cystathionine beta-synthase family. As to quaternary structure, homodimer. Pyridoxal 5'-phosphate is required as a cofactor.

The catalysed reaction is L-homocysteine + L-serine = L,L-cystathionine + H2O. It functions in the pathway amino-acid biosynthesis; L-cysteine biosynthesis; L-cysteine from L-homocysteine and L-serine: step 1/2. Its activity is regulated as follows. Has no response to S-adenosyl-methionine/AdoMet, unlike mammalian orthologs. Binds non-covalently to a heme group that may control the redox sensitivity of the enzyme. Hydro-lyase catalyzing the first step of the transsulfuration pathway, where the hydroxyl group of L-serine is displaced by L-homocysteine in a beta-replacement reaction to form L-cystathionine, the precursor of L-cysteine. In Apis mellifera (Honeybee), this protein is Cystathionine beta-synthase.